The following is a 716-amino-acid chain: ATP-dependent DNA helicase DinG (716 aa).

The Helicase ATP-binding domain maps to 17 to 294 (ALQEQIPDFI…TCMEQFRPKT (278 aa)). Position 54–61 (54–61 (APTGVGKT)) interacts with ATP. C120 contacts [4Fe-4S] cluster. Positions 131-134 (EPTQ) match the DEAH box motif. [4Fe-4S] cluster-binding residues include C194, C199, and C205. The DEAH box signature appears at 248 to 251 (DEGH). A Helicase C-terminal domain is found at 517 to 698 (HIAEMAAFFR…VFPIEQPEVP (182 aa)).

The protein belongs to the helicase family. DinG subfamily. Type 1 sub-subfamily. [4Fe-4S] cluster serves as cofactor.

The enzyme catalyses Couples ATP hydrolysis with the unwinding of duplex DNA at the replication fork by translocating in the 5'-3' direction. This creates two antiparallel DNA single strands (ssDNA). The leading ssDNA polymer is the template for DNA polymerase III holoenzyme which synthesizes a continuous strand.. It carries out the reaction ATP + H2O = ADP + phosphate + H(+). In terms of biological role, DNA-dependent ATPase and 5'-3' DNA helicase. Unwinds D-loops, R-loops, forked DNA and G-quadruplex DNA. The sequence is that of ATP-dependent DNA helicase DinG from Escherichia coli O6:H1 (strain CFT073 / ATCC 700928 / UPEC).